A 457-amino-acid chain; its full sequence is Multidrug resistance protein MdtK (457 aa).

A run of 12 helical transmembrane segments spans residues 11 to 31 (LLALAIPVILAQIAQTAMGFV), 53 to 73 (IWLPAILFGHGLLLALTPVIA), 93 to 113 (WLAGFVSVLIMLVLWNAGYII), 127 to 147 (AVGYLRALLWGAPGYLFFQVA), 160 to 180 (GMVMGFIGLLVNIPVNYIFIY), 189 to 209 (GGVGCGVATAAVYWVMFLAMV), 243 to 263 (LPIALALFFEVTLFAVVALLV), 276 to 296 (IALNFSSLMFVLPMSLAAAVT), 314 to 334 (AARTGLMVGVCMATLTAIFTV), 350 to 370 (VVTLAAHLMLLAAVYQISDSI), 387 to 407 (IFYITFTAYWVLGLPSGYILA), and 418 to 438 (PAGFWIGFIIGLTSAAIMMML).

The protein belongs to the multi antimicrobial extrusion (MATE) (TC 2.A.66.1) family. MdtK subfamily.

It localises to the cell inner membrane. Functionally, multidrug efflux pump that functions probably as a Na(+)/drug antiporter. The sequence is that of Multidrug resistance protein MdtK from Escherichia coli O45:K1 (strain S88 / ExPEC).